The following is a 378-amino-acid chain: Anhydro-N-acetylmuramic acid kinase (378 aa).

9–16 (GTSADGID) is a binding site for ATP.

Belongs to the anhydro-N-acetylmuramic acid kinase family.

It carries out the reaction 1,6-anhydro-N-acetyl-beta-muramate + ATP + H2O = N-acetyl-D-muramate 6-phosphate + ADP + H(+). The protein operates within amino-sugar metabolism; 1,6-anhydro-N-acetylmuramate degradation. It functions in the pathway cell wall biogenesis; peptidoglycan recycling. In terms of biological role, catalyzes the specific phosphorylation of 1,6-anhydro-N-acetylmuramic acid (anhMurNAc) with the simultaneous cleavage of the 1,6-anhydro ring, generating MurNAc-6-P. Is required for the utilization of anhMurNAc either imported from the medium or derived from its own cell wall murein, and thus plays a role in cell wall recycling. This chain is Anhydro-N-acetylmuramic acid kinase, found in Prochlorococcus marinus (strain NATL1A).